Reading from the N-terminus, the 366-residue chain is MSLYIGLMSGTSMDGIDAALLELPSNQLIHGITKQYSDDVRRNLDDLIIGNHLTLASICQLNTLIGREFAEAVRQLLIEIKVHPKEIQAIGSHGQTVCHDTSGNIPYTLQLGCGHTISSLTGITVVADFRTRDLVNGGQGAPFAPLYHQQIFSKVNESVAVVNIGGIANVTFIAKNQMTRGWDIGPGNCLMDAWIYKNKGALFDKNGVWASQGEVIHPLLEYLLQDPFFHLDSPKSIGKEYFSLSWLQKHLKPDYTPADIQATLLALTAHTIAETILNESGEIKQLYLCGGGAHNTHLKESLARLLPGITVKSIAELGISPDYLEAMMFAWLAAQTINQIPVNLASITGAKGIAILGAVYPIIKSY.

Residue glycine 10–aspartate 17 coordinates ATP.

It belongs to the anhydro-N-acetylmuramic acid kinase family.

It carries out the reaction 1,6-anhydro-N-acetyl-beta-muramate + ATP + H2O = N-acetyl-D-muramate 6-phosphate + ADP + H(+). Its pathway is amino-sugar metabolism; 1,6-anhydro-N-acetylmuramate degradation. It functions in the pathway cell wall biogenesis; peptidoglycan recycling. In terms of biological role, catalyzes the specific phosphorylation of 1,6-anhydro-N-acetylmuramic acid (anhMurNAc) with the simultaneous cleavage of the 1,6-anhydro ring, generating MurNAc-6-P. Is required for the utilization of anhMurNAc either imported from the medium or derived from its own cell wall murein, and thus plays a role in cell wall recycling. The chain is Anhydro-N-acetylmuramic acid kinase from Legionella pneumophila (strain Paris).